A 198-amino-acid polypeptide reads, in one-letter code: NAD(P)H dehydrogenase (quinone) (198 aa).

Residues 4-189 (ILVLYYSMYG…SIARYQGEYV (186 aa)) enclose the Flavodoxin-like domain. FMN contacts are provided by residues 10–15 (SMYGHI) and 78–80 (TRF). Residue tyrosine 12 coordinates NAD(+). Tryptophan 98 contacts substrate. FMN contacts are provided by residues 113 to 118 (STGTGG) and histidine 133.

This sequence belongs to the WrbA family. FMN is required as a cofactor.

It catalyses the reaction a quinone + NADH + H(+) = a quinol + NAD(+). The catalysed reaction is a quinone + NADPH + H(+) = a quinol + NADP(+). This Salmonella paratyphi A (strain ATCC 9150 / SARB42) protein is NAD(P)H dehydrogenase (quinone).